Consider the following 116-residue polypeptide: Large ribosomal subunit protein uL18 (116 aa).

The protein belongs to the universal ribosomal protein uL18 family. As to quaternary structure, part of the 50S ribosomal subunit; part of the 5S rRNA/L5/L18/L25 subcomplex. Contacts the 5S and 23S rRNAs.

In terms of biological role, this is one of the proteins that bind and probably mediate the attachment of the 5S RNA into the large ribosomal subunit, where it forms part of the central protuberance. In Pseudomonas fluorescens (strain ATCC BAA-477 / NRRL B-23932 / Pf-5), this protein is Large ribosomal subunit protein uL18.